We begin with the raw amino-acid sequence, 617 residues long: Chaperone protein HscA homolog (617 aa).

Belongs to the heat shock protein 70 family.

Functionally, chaperone involved in the maturation of iron-sulfur cluster-containing proteins. Has a low intrinsic ATPase activity which is markedly stimulated by HscB. The chain is Chaperone protein HscA homolog from Aliivibrio salmonicida (strain LFI1238) (Vibrio salmonicida (strain LFI1238)).